The primary structure comprises 633 residues: Proline-rich receptor-like protein kinase PERK4 (633 aa).

Residues 1–29 show a composition bias toward low complexity; sequence MASSPESAPPTNSTSSPSPPSNTNSTTSS. Positions 1–145 are disordered; it reads MASSPESAPP…GSSGGGGGGR (145 aa). Topologically, residues 1–151 are extracellular; the sequence is MASSPESAPP…GGGRSNTNTA (151 aa). 2 N-linked (GlcNAc...) asparagine glycosylation sites follow: Asn-12 and Asn-24. Pro residues-rich tracts occupy residues 30–41 and 48–65; these read PPAPSPPSPTPP and SPPP…PNPP. Residue Asn-66 is glycosylated (N-linked (GlcNAc...) asparagine). Over residues 77–90 the composition is skewed to gly residues; that stretch reads QGGGGERGNGGNNG. Low complexity predominate over residues 106-135; that stretch reads SRSNGDNGGSRSSPPGDTGGSRSDNPPSSG. Over residues 136-145 the composition is skewed to gly residues; the sequence is GSSGGGGGGR. Residues 152-172 form a helical membrane-spanning segment; sequence IIVGVLVGAGLLMIVLIIVCL. The Cytoplasmic segment spans residues 173 to 633; it reads RRKKKRKDSF…MGTKSPTPPK (461 aa). Positions 193–222 are enriched in low complexity; the sequence is QYYGNNNNNNASQNYPNWHLNSQGQNQQST. The tract at residues 193–255 is disordered; the sequence is QYYGNNNNNN…SMYSGPSRPV (63 aa). Phosphothreonine is present on Thr-273. The Protein kinase domain maps to 284-562; sequence FTDANLLGQG…VRALEGEVSL (279 aa). ATP contacts are provided by residues 290–298 and Lys-312; that span reads LGQGGFGYV. Residue Tyr-357 is modified to Phosphotyrosine. The active-site Proton acceptor is Asp-408. Ser-441 carries the phosphoserine modification. 2 positions are modified to phosphothreonine: Thr-442 and Thr-447. Tyr-455 carries the post-translational modification Phosphotyrosine. Positions 608 to 619 are enriched in polar residues; it reads FPVSDCEGTSSN. The tract at residues 608-633 is disordered; the sequence is FPVSDCEGTSSNDSRDMGTKSPTPPK.

Belongs to the protein kinase superfamily. Ser/Thr protein kinase family. In terms of tissue distribution, mostly expressed in inflorescence bolts. Also present in roots, stems, germinated seeds, cotyledons, pollen, stamen and stigma.

Its subcellular location is the cell membrane. The catalysed reaction is L-seryl-[protein] + ATP = O-phospho-L-seryl-[protein] + ADP + H(+). The enzyme catalyses L-threonyl-[protein] + ATP = O-phospho-L-threonyl-[protein] + ADP + H(+). Activated by ABA and Ca(2+). Required during abscisic acid (ABA)-mediated activation of Ca(2+) channels. Regulates ABA signaling pathways. Modulates the expression of genes related to cell elongation and ABA signaling during root growth. In Arabidopsis thaliana (Mouse-ear cress), this protein is Proline-rich receptor-like protein kinase PERK4 (PERK4).